The chain runs to 348 residues: Dihydroorotase (348 aa).

His-17 and His-19 together coordinate Zn(2+). Substrate is bound by residues His-19–Arg-21 and Asn-45. Zn(2+) contacts are provided by Lys-103, His-140, and His-178. Lys-103 carries the post-translational modification N6-carboxylysine. His-140 contributes to the substrate binding site. A substrate-binding site is contributed by Leu-223. Residue Asp-251 participates in Zn(2+) binding. The active site involves Asp-251. Residues His-255 and Ala-267 each coordinate substrate.

Belongs to the metallo-dependent hydrolases superfamily. DHOase family. Class II DHOase subfamily. Homodimer. Requires Zn(2+) as cofactor.

The catalysed reaction is (S)-dihydroorotate + H2O = N-carbamoyl-L-aspartate + H(+). Its pathway is pyrimidine metabolism; UMP biosynthesis via de novo pathway; (S)-dihydroorotate from bicarbonate: step 3/3. Catalyzes the reversible cyclization of carbamoyl aspartate to dihydroorotate. In Salmonella paratyphi C (strain RKS4594), this protein is Dihydroorotase.